We begin with the raw amino-acid sequence, 709 residues long: Solute carrier organic anion transporter family member 2B1 (709 aa).

The disordered stretch occupies residues 1–38; it reads MGPRIGPAGEVPQVPDKETKATMGTENTPGGKASPDPQ. Residues 1 to 49 are Cytoplasmic-facing; it reads MGPRIGPAGEVPQVPDKETKATMGTENTPGGKASPDPQDVRPSVFHNIK. At S34 the chain carries Phosphoserine. Residues 50–69 form a helical membrane-spanning segment; the sequence is LFVLCHSLLQLAQLMISGYL. A required for E1S and taurocholate transport; required for transporter stability region spans residues 51–69; that stretch reads FVLCHSLLQLAQLMISGYL. Topologically, residues 70 to 88 are extracellular; sequence KSSISTVEKRFGLSSQTSG. Residues 89–109 traverse the membrane as a helical segment; sequence LLASFNEVGNTALIVFVSYFG. The Cytoplasmic segment spans residues 110–115; the sequence is SRVHRP. A helical membrane pass occupies residues 116 to 140; it reads RMIGYGAILVALAGLLMTLPHFISE. Topologically, residues 141–185 are extracellular; it reads PYRYDNTSPEDMPQDFKASLCLPTTSAPASAPSNGNCSSYTETQH. N176 carries N-linked (GlcNAc...) asparagine glycosylation. A helical membrane pass occupies residues 186-215; that stretch reads LSVVGIMFVAQTLLGVGGVPIQPFGISYID. Residues 216 to 234 lie on the Cytoplasmic side of the membrane; it reads DFAHNSNSPLYLGILFAVT. Residues 235–255 form a helical membrane-spanning segment; the sequence is MMGPGLAFGLGSLMLRLYVDI. Residues 256 to 273 lie on the Extracellular side of the membrane; the sequence is NQMPEGGISLTIKDPRWV. The helical transmembrane segment at 274-298 threads the bilayer; it reads GAWWLGFLIAAGAVALAAIPYFFFP. Residues 299-366 lie on the Cytoplasmic side of the membrane; sequence KEMPKEKREL…IKVFPRVLLQ (68 aa). T318 is modified (phosphothreonine). A disordered region spans residues 319 to 342; that stretch reads DSPARKGKDSPSKQSPGESTKKQD. Phosphoserine is present on S320. A helical membrane pass occupies residues 367–388; that stretch reads TLRHPIFLLVVLSQVCLSSMAA. The Extracellular segment spans residues 389-408; that stretch reads GMATFLPKFLERQFSITASY. A helical membrane pass occupies residues 409–432; it reads ANLLIGCLSFPSVIVGIVVGGVLV. Topologically, residues 433–436 are cytoplasmic; sequence KRLH. A helical transmembrane segment spans residues 437 to 460; it reads LGPVGCGALCLLGMLLCLFFSLPL. Over 461–564 the chain is Extracellular; it reads FFIGCSSHQI…STCSHLVVPF (104 aa). Residues 483–543 form the Kazal-like domain; sequence LELSPSCMEA…VFYTNCSCVV (61 aa). Cystine bridges form between C489-C520, C495-C516, and C504-C541. An N-linked (GlcNAc...) asparagine glycan is attached at N538. Residues 565–587 traverse the membrane as a helical segment; sequence LLLVSLGSALACLTHTPSFMLIL. Residues 588–596 lie on the Cytoplasmic side of the membrane; that stretch reads RGVKKEDKT. Residues 597–622 form a helical membrane-spanning segment; the sequence is LAVGIQFMFLRILAWMPSPVIHGSAI. The Extracellular portion of the chain corresponds to 623 to 655; the sequence is DTTCVHWALSCGRRAVCRYYNNDLLRNRFIGLQ. A helical membrane pass occupies residues 656–673; it reads FFFKTGSVICFALVLAVL. The Cytoplasmic portion of the chain corresponds to 674 to 709; it reads RQQDKEARTKESRSSPAVEQQLLVSGPGKKPEDSRV. A disordered region spans residues 679–709; the sequence is EARTKESRSSPAVEQQLLVSGPGKKPEDSRV.

The protein belongs to the organo anion transporter (TC 2.A.60) family. Strongly expressed in the liver, at the sinusoidal membrane of the hepatocytes. Expressed in the kidney. Expressed in placental trophoblasts and syncytiotrophoblast. Expressed in the small intestine. Expressed in the blood-brain barrier, in endothelial cells of brain capillaries. Expressed in the retina, in the inner nuclear layer and the inner plexiform layer. Expressed in skelettal muscles. In testis, primarily localized to the basal membrane of Sertoli cells and weakly expressed within the tubules. Also expressed in pancreas, lung, heart, colon, ovary and spleen. Expressed in fetal brain, heart, kidney, liver, lung, skeletal muscle, spleen and pancreas. As to expression, highest expression in brain. Predominant isoform compared to isoform 3 in small intestine duodenum, kidney, placenta, and skeletal muscle. In terms of tissue distribution, predominant isoform compared to isoform 1 in liver. Also expressed in small intestine duodenum, kidney, brain, placenta, and skeletal muscle.

It is found in the cell membrane. It localises to the basal cell membrane. Its subcellular location is the basolateral cell membrane. The protein resides in the apical cell membrane. The catalysed reaction is dehydroepiandrosterone 3-sulfate(out) = dehydroepiandrosterone 3-sulfate(in). It catalyses the reaction estrone 3-sulfate(out) = estrone 3-sulfate(in). It carries out the reaction estrone 3-sulfate(out) + hydrogencarbonate(in) = estrone 3-sulfate(in) + hydrogencarbonate(out). The enzyme catalyses taurocholate(out) = taurocholate(in). The catalysed reaction is coproporphyrin III(out) = coproporphyrin III(in). It catalyses the reaction substance P(out) = substance P(in). It carries out the reaction pregnenolone sulfate(out) = pregnenolone sulfate(in). The enzyme catalyses prostaglandin E2(out) = prostaglandin E2(in). The catalysed reaction is prostaglandin D2(out) = prostaglandin D2(in). It catalyses the reaction L-thyroxine(out) = L-thyroxine(in). E1S, DHEA-S and PregS transports are regulated by steroid hormones. In the case of testosterone, transport of E1S and DHEA-S was inhibited, whereas progesterone stimulated E1S, DHEA-S and PregS uptake. Progesterone stimulates high-affinity uptake of E1S whereas it inhibits low-affinity uptake of E1S. Progesterone doesn't affect the uptake of PGE2. Its function is as follows. Mediates the Na(+)-independent transport of steroid sulfate conjugates and other specific organic anions. Responsible for the transport of estrone 3-sulfate (E1S) through the basal membrane of syncytiotrophoblast, highlighting a potential role in the placental absorption of fetal-derived sulfated steroids including the steroid hormone precursor dehydroepiandrosterone sulfate (DHEA-S). Also facilitates the uptake of sulfated steroids at the basal/sinusoidal membrane of hepatocytes, therefore accounting for the major part of organic anions clearance of liver. Mediates the intestinal uptake of sulfated steroids. Mediates the uptake of the neurosteroids DHEA-S and pregnenolone sulfate (PregS) into the endothelial cells of the blood-brain barrier as the first step to enter the brain. Also plays a role in the reuptake of neuropeptides such as substance P/TAC1 and vasoactive intestinal peptide/VIP released from retinal neurons. May act as a heme transporter that promotes cellular iron availability via heme oxygenase/HMOX2 and independently of TFRC. Also transports heme by-product coproporphyrin III (CPIII), and may be involved in their hepatic disposition. Mediates the uptake of other substrates such as prostaglandins D2 (PGD2), E1 (PGE1) and E2 (PGE2), taurocholate, L-thyroxine, leukotriene C4 and thromboxane B2. May contribute to regulate the transport of organic compounds in testis across the blood-testis-barrier. Shows a pH-sensitive substrate specificity which may be ascribed to the protonation state of the binding site and leads to a stimulation of substrate transport in an acidic microenvironment. The exact transport mechanism has not been yet deciphered but most likely involves an anion exchange, coupling the cellular uptake of organic substrate with the efflux of an anionic compound. Hydrogencarbonate/HCO3(-) acts as a probable counteranion that exchanges for organic anions. Cytoplasmic glutamate may also act as counteranion in the placenta. An inwardly directed proton gradient has also been proposed as the driving force of E1S uptake with a (H(+):E1S) stoichiometry of (1:1). Has estrone 3-sulfate (E1S) transport activity comparable with the full-length isoform 1. This chain is Solute carrier organic anion transporter family member 2B1, found in Homo sapiens (Human).